We begin with the raw amino-acid sequence, 148 residues long: Macrodomain Ter protein (148 aa).

This sequence belongs to the MatP family. In terms of assembly, homodimer.

Its subcellular location is the cytoplasm. Its function is as follows. Required for spatial organization of the terminus region of the chromosome (Ter macrodomain) during the cell cycle. Prevents early segregation of duplicated Ter macrodomains during cell division. Binds specifically to matS, which is a 13 bp signature motif repeated within the Ter macrodomain. In Haemophilus influenzae (strain ATCC 51907 / DSM 11121 / KW20 / Rd), this protein is Macrodomain Ter protein.